The following is a 367-amino-acid chain: Zinc transport system membrane protein TroD (367 aa).

Helical transmembrane passes span 5 to 25 (VVLIAVVVSVACALCGVFLVL), 28 to 48 (ISLMSDAISHSVILGIVLGYF), 56 to 76 (FVPFVGAVIAGICSVICAELL), 87 to 107 (AVGLVFPAMFGLGVILVSLYA), 140 to 160 (SLVQMGSVLCGLLLLLALFFK), 170 to 190 (VLATSLGFSPTLINYGLMLAV), 201 to 221 (VGAVLVIALMITPPAAALLLT), 224 to 244 (LLLMLVLASLLASCASISGLF), and 251 to 271 (GSIAGAMATMAGVLFALVYLF).

Belongs to the ABC-3 integral membrane protein family.

It is found in the cell membrane. Functionally, part of an ATP-driven transport system TroABCD for zinc. This Treponema pallidum (strain Nichols) protein is Zinc transport system membrane protein TroD (troD).